We begin with the raw amino-acid sequence, 357 residues long: UDP-N-acetylglucosamine--N-acetylmuramyl-(pentapeptide) pyrophosphoryl-undecaprenol N-acetylglucosamine transferase (357 aa).

UDP-N-acetyl-alpha-D-glucosamine is bound by residues 13–15 (TGG), N125, R161, S189, I243, and Q288.

Belongs to the glycosyltransferase 28 family. MurG subfamily.

The protein resides in the cell inner membrane. The enzyme catalyses di-trans,octa-cis-undecaprenyl diphospho-N-acetyl-alpha-D-muramoyl-L-alanyl-D-glutamyl-meso-2,6-diaminopimeloyl-D-alanyl-D-alanine + UDP-N-acetyl-alpha-D-glucosamine = di-trans,octa-cis-undecaprenyl diphospho-[N-acetyl-alpha-D-glucosaminyl-(1-&gt;4)]-N-acetyl-alpha-D-muramoyl-L-alanyl-D-glutamyl-meso-2,6-diaminopimeloyl-D-alanyl-D-alanine + UDP + H(+). The protein operates within cell wall biogenesis; peptidoglycan biosynthesis. Functionally, cell wall formation. Catalyzes the transfer of a GlcNAc subunit on undecaprenyl-pyrophosphoryl-MurNAc-pentapeptide (lipid intermediate I) to form undecaprenyl-pyrophosphoryl-MurNAc-(pentapeptide)GlcNAc (lipid intermediate II). The protein is UDP-N-acetylglucosamine--N-acetylmuramyl-(pentapeptide) pyrophosphoryl-undecaprenol N-acetylglucosamine transferase of Bordetella petrii (strain ATCC BAA-461 / DSM 12804 / CCUG 43448).